Here is a 174-residue protein sequence, read N- to C-terminus: MKFLLLTVGLTSICAIQAIENIHSKEELVVEKLIGPWYRVEEAKAMEFSIPLFDMNIKEVNRTPEGNLELIVLEQTDSCVEKKFLLKKTEKPAEFEIYIPSESASYTLSVMETDYDNYILGCLENVNYREKMACAHYERRIEENKGMEEFKKIVRTLTIPYTMIEAQTREMCRV.

The N-terminal stretch at 1-18 is a signal peptide; sequence MKFLLLTVGLTSICAIQA. 2 disulfide bridges follow: cysteine 79–cysteine 172 and cysteine 122–cysteine 134.

The protein belongs to the calycin superfamily. Lipocalin family. As to quaternary structure, monomer.

It is found in the secreted. In terms of biological role, lactoglobulin is the primary component of whey, it binds retinol and is probably involved in the transport of that molecule. This is Beta-lactoglobulin (LGB) from Trichosurus vulpecula (Brush-tailed possum).